The chain runs to 290 residues: 4-hydroxy-3-methylbut-2-enyl diphosphate reductase (290 aa).

Cys13 contacts [4Fe-4S] cluster. Positions 41 and 75 each coordinate (2E)-4-hydroxy-3-methylbut-2-enyl diphosphate. Dimethylallyl diphosphate contacts are provided by His41 and His75. Isopentenyl diphosphate is bound by residues His41 and His75. A [4Fe-4S] cluster-binding site is contributed by Cys97. (2E)-4-hydroxy-3-methylbut-2-enyl diphosphate is bound at residue His129. Dimethylallyl diphosphate is bound at residue His129. Residue His129 participates in isopentenyl diphosphate binding. The Proton donor role is filled by Glu131. Thr167 contacts (2E)-4-hydroxy-3-methylbut-2-enyl diphosphate. Position 198 (Cys198) interacts with [4Fe-4S] cluster. Positions 226, 227, 228, and 270 each coordinate (2E)-4-hydroxy-3-methylbut-2-enyl diphosphate. Ser226, Ser227, Asn228, and Ser270 together coordinate dimethylallyl diphosphate. Residues Ser226, Ser227, Asn228, and Ser270 each contribute to the isopentenyl diphosphate site.

The protein belongs to the IspH family. [4Fe-4S] cluster is required as a cofactor.

It carries out the reaction isopentenyl diphosphate + 2 oxidized [2Fe-2S]-[ferredoxin] + H2O = (2E)-4-hydroxy-3-methylbut-2-enyl diphosphate + 2 reduced [2Fe-2S]-[ferredoxin] + 2 H(+). It catalyses the reaction dimethylallyl diphosphate + 2 oxidized [2Fe-2S]-[ferredoxin] + H2O = (2E)-4-hydroxy-3-methylbut-2-enyl diphosphate + 2 reduced [2Fe-2S]-[ferredoxin] + 2 H(+). It functions in the pathway isoprenoid biosynthesis; dimethylallyl diphosphate biosynthesis; dimethylallyl diphosphate from (2E)-4-hydroxy-3-methylbutenyl diphosphate: step 1/1. It participates in isoprenoid biosynthesis; isopentenyl diphosphate biosynthesis via DXP pathway; isopentenyl diphosphate from 1-deoxy-D-xylulose 5-phosphate: step 6/6. Functionally, catalyzes the conversion of 1-hydroxy-2-methyl-2-(E)-butenyl 4-diphosphate (HMBPP) into a mixture of isopentenyl diphosphate (IPP) and dimethylallyl diphosphate (DMAPP). Acts in the terminal step of the DOXP/MEP pathway for isoprenoid precursor biosynthesis. This is 4-hydroxy-3-methylbut-2-enyl diphosphate reductase from Bacteroides fragilis (strain ATCC 25285 / DSM 2151 / CCUG 4856 / JCM 11019 / LMG 10263 / NCTC 9343 / Onslow / VPI 2553 / EN-2).